A 607-amino-acid polypeptide reads, in one-letter code: Elongation factor 4 (607 aa).

One can recognise a tr-type G domain in the interval 11–193; sequence GKIRNFSIIA…QIVEKVPAPT (183 aa). Residues 23 to 28 and 140 to 143 each bind GTP; these read DHGKST and NKID.

This sequence belongs to the TRAFAC class translation factor GTPase superfamily. Classic translation factor GTPase family. LepA subfamily.

The protein localises to the cell membrane. It carries out the reaction GTP + H2O = GDP + phosphate + H(+). Functionally, required for accurate and efficient protein synthesis under certain stress conditions. May act as a fidelity factor of the translation reaction, by catalyzing a one-codon backward translocation of tRNAs on improperly translocated ribosomes. Back-translocation proceeds from a post-translocation (POST) complex to a pre-translocation (PRE) complex, thus giving elongation factor G a second chance to translocate the tRNAs correctly. Binds to ribosomes in a GTP-dependent manner. In Streptococcus pneumoniae (strain JJA), this protein is Elongation factor 4.